The following is a 65-amino-acid chain: Large ribosomal subunit protein uL29 (65 aa).

Belongs to the universal ribosomal protein uL29 family.

The sequence is that of Large ribosomal subunit protein uL29 from Parabacteroides distasonis (strain ATCC 8503 / DSM 20701 / CIP 104284 / JCM 5825 / NCTC 11152).